Consider the following 344-residue polypeptide: Anthranilate phosphoribosyltransferase (344 aa).

5-phospho-alpha-D-ribose 1-diphosphate contacts are provided by residues G86, 89–90 (GD), T94, 96–99 (NIST), 114–122 (KHGNKSASG), and S126. G86 lines the anthranilate pocket. S98 lines the Mg(2+) pocket. N117 is a binding site for anthranilate. Residue R172 participates in anthranilate binding. Residues D231 and E232 each contribute to the Mg(2+) site.

Belongs to the anthranilate phosphoribosyltransferase family. As to quaternary structure, homodimer. Requires Mg(2+) as cofactor.

The catalysed reaction is N-(5-phospho-beta-D-ribosyl)anthranilate + diphosphate = 5-phospho-alpha-D-ribose 1-diphosphate + anthranilate. It functions in the pathway amino-acid biosynthesis; L-tryptophan biosynthesis; L-tryptophan from chorismate: step 2/5. Functionally, catalyzes the transfer of the phosphoribosyl group of 5-phosphorylribose-1-pyrophosphate (PRPP) to anthranilate to yield N-(5'-phosphoribosyl)-anthranilate (PRA). This Prochlorococcus marinus (strain MIT 9301) protein is Anthranilate phosphoribosyltransferase.